A 729-amino-acid polypeptide reads, in one-letter code: MAKLSTPLYLICLAFIFTRDVSANDYRQASSVYIVYMGTLPEIKYSPPSHHLSILQKLVGTIAASHLLVRSYKRSFNGFAANLSQAESQKLQNMKEVVSVFPSKSHELTTTRSWDFVGFGEKARRESVKESDVIVGVIDSGIWPESESFDDEGFGPPPKKWKGSCKGGLKFACNNKLIGARFYNKFADSARDEEGHGTHTASTAAGNAVQAASFYGLAQGTARGGVPSARIAAYKVCFNRCNDVDILAAFDDAIADGVDVISISISADYVSNLLNASVAIGSFHAMMRGIITAGSAGNNGPDQGSVANVSPWMITVAASGTDRQFIDRVVLGNGKALTGISVNTFNLNGTKFPIVYGQNVSRNCSQAQAGYCSSGCVDSELVKGKIVLCDDFLGYREAYLAGAIGVIVQNTLLPDSAFVVPFPASSLGFEDYKSIKSYIESAEPPQAEILRTEEIVDREAPYVPSFSSRGPSFVIQNLLKPDVSAPGLEILAAFSPVASPSSFLNPEDKRSVRYSVMSGTSMACPHVAGVAAYVKSFHPDWSPSAIKSAIMTTATPMNLKKNPEQEFAYGSGQINPTKASDPGLVYEVETEDYLKMLCAEGFDSTTLTTTSGQNVTCSERTEVKDLNYPTMTTFVSSLDPFNVTFKRTVTNVGFPNSTYKASVVPLQPELQISIEPEILRFGFLEEKKSFVVTISGKELKDGSFVSSSVVWSDGSHSVRSPIVAYSIQP.

The N-terminal stretch at 1–23 (MAKLSTPLYLICLAFIFTRDVSA) is a signal peptide. The propeptide at 24-109 (NDYRQASSVY…VFPSKSHELT (86 aa)) is activation peptide. Positions 32–108 (VYIVYMGTLP…SVFPSKSHEL (77 aa)) constitute an Inhibitor I9 domain. Asparagine 82 is a glycosylation site (N-linked (GlcNAc...) asparagine). Positions 113-580 (SWDFVGFGEK…SGQINPTKAS (468 aa)) constitute a Peptidase S8 domain. Active-site charge relay system residues include aspartate 139 and histidine 196. 4 N-linked (GlcNAc...) asparagine glycosylation sites follow: asparagine 275, asparagine 348, asparagine 359, and asparagine 363. The PA domain maps to 350–436 (TKFPIVYGQN…LGFEDYKSIK (87 aa)). The active-site Charge relay system is serine 521. 3 N-linked (GlcNAc...) asparagine glycosylation sites follow: asparagine 614, asparagine 642, and asparagine 656.

Belongs to the peptidase S8 family. In terms of processing, the C-terminal propeptide is autocleaved.

Its subcellular location is the secreted. This Arabidopsis thaliana (Mouse-ear cress) protein is Subtilisin-like protease SBT4.3.